Here is a 339-residue protein sequence, read N- to C-terminus: tRNA N6-adenosine threonylcarbamoyltransferase (339 aa).

2 residues coordinate Fe cation: His-117 and His-121. Substrate-binding positions include 140–144 (VVSGG), Asp-173, Gly-186, and Asn-279. Asp-307 contributes to the Fe cation binding site.

This sequence belongs to the KAE1 / TsaD family. The cofactor is Fe(2+).

Its subcellular location is the cytoplasm. It carries out the reaction L-threonylcarbamoyladenylate + adenosine(37) in tRNA = N(6)-L-threonylcarbamoyladenosine(37) in tRNA + AMP + H(+). Its function is as follows. Required for the formation of a threonylcarbamoyl group on adenosine at position 37 (t(6)A37) in tRNAs that read codons beginning with adenine. Is involved in the transfer of the threonylcarbamoyl moiety of threonylcarbamoyl-AMP (TC-AMP) to the N6 group of A37, together with TsaE and TsaB. TsaD likely plays a direct catalytic role in this reaction. The polypeptide is tRNA N6-adenosine threonylcarbamoyltransferase (Syntrophomonas wolfei subsp. wolfei (strain DSM 2245B / Goettingen)).